The primary structure comprises 64 residues: MAKAKGARIVITLECTECRSNTAKRSPGVSRYTTQKNRRNTTERLEIKKFCPHCNKHTAHKEIK.

Belongs to the bacterial ribosomal protein bL33 family.

The polypeptide is Large ribosomal subunit protein bL33 (Synechococcus elongatus (strain ATCC 33912 / PCC 7942 / FACHB-805) (Anacystis nidulans R2)).